Here is a 336-residue protein sequence, read N- to C-terminus: tRNA(Ile)-lysidine synthase (336 aa).

ATP is bound at residue 40–45; it reads SGGQDS.

The protein belongs to the tRNA(Ile)-lysidine synthase family.

Its subcellular location is the cytoplasm. It catalyses the reaction cytidine(34) in tRNA(Ile2) + L-lysine + ATP = lysidine(34) in tRNA(Ile2) + AMP + diphosphate + H(+). Its function is as follows. Ligates lysine onto the cytidine present at position 34 of the AUA codon-specific tRNA(Ile) that contains the anticodon CAU, in an ATP-dependent manner. Cytidine is converted to lysidine, thus changing the amino acid specificity of the tRNA from methionine to isoleucine. The chain is tRNA(Ile)-lysidine synthase from Prochlorococcus marinus subsp. pastoris (strain CCMP1986 / NIES-2087 / MED4).